The following is a 497-amino-acid chain: uncharacterized protein (497 aa).

Residue 266-273 coordinates ATP; the sequence is GIQGTGKS.

Belongs to the AAA ATPase family. Highly divergent.

The protein resides in the plastid. The protein localises to the chloroplast. This is an uncharacterized protein from Trieres chinensis (Marine centric diatom).